The sequence spans 25 residues: Pregnancy-associated glycoprotein 72 (25 aa).

N-linked (GlcNAc...) asparagine glycosylation is found at asparagine 4 and asparagine 21.

This sequence belongs to the peptidase A1 family. In terms of processing, N-glycosylated. In terms of tissue distribution, expressed in chorionic epithelium (trophectoderm).

It is found in the secreted. It localises to the extracellular space. This Bison bison (American bison) protein is Pregnancy-associated glycoprotein 72.